Here is a 268-residue protein sequence, read N- to C-terminus: MDRKYKDTSSEEEDSLNEDEMAWIPWYCNLKGNEFFATIDEDYINDDFNLTGLSSLVQFYDSALGIILDSDPDDPLSEDQQEALERSADILYGLIHARYILTPKGLAHMHEKFKKAEFGRCPRVFCQNQPVLPVGLADMQGVDTVKVYCPRCNDIFNPKYRRHSHIDGAYFGTTFPHLLLITYPELIPTKPPQQYIPKIYGFKIHKSARERQLQIQQKKNSLSNNNQNNQNNNINNNNNNNNNNNNNNNNNNNNQQNNNNQQNNNTNK.

Residues 222-268 form a disordered region; the sequence is LSNNNQNNQNNNINNNNNNNNNNNNNNNNNNNNQQNNNNQQNNNTNK. Over residues 224 to 268 the composition is skewed to low complexity; sequence NNNQNNQNNNINNNNNNNNNNNNNNNNNNNNQQNNNNQQNNNTNK.

The protein belongs to the casein kinase 2 subunit beta family. Casein kinase II/CK2 is a tetramer composed of two alpha subunit and two beta subunits.

In terms of biological role, regulatory subunit of casein kinase II/CK2. As part of the kinase complex regulates the basal catalytic activity of the alpha subunit a constitutively active serine/threonine-protein kinase that phosphorylates a large number of substrates containing acidic residues C-terminal to the phosphorylated serine or threonine. The polypeptide is Casein kinase II subunit beta (csnk2b) (Dictyostelium discoideum (Social amoeba)).